The chain runs to 251 residues: Dehydration-responsive element-binding protein 1I (251 aa).

Positions 1–50 (MCTSKLEEITGEWPPPALQAASTTSSSEPCRRLSPPSSKRPAGRTKFHET) are disordered. Positions 54–114 (VFRGVRRRGR…GRAAACLNFA (61 aa)) form a DNA-binding region, AP2/ERF. Residues 169–198 (ATSEPSAASDDDAVTSSSSTTDADEEASPF) are disordered.

It belongs to the AP2/ERF transcription factor family. ERF subfamily.

Its subcellular location is the nucleus. In terms of biological role, transcriptional activator that binds specifically to the DNA sequence 5'-[AG]CCGAC-3'. Binding to the C-repeat/DRE element mediates high salinity- and dehydration-inducible transcription. The sequence is that of Dehydration-responsive element-binding protein 1I (DREB1I) from Oryza sativa subsp. japonica (Rice).